The primary structure comprises 423 residues: Mannose-6-phosphate isomerase (423 aa).

An N-acetylalanine modification is found at A2. 2 positions are modified to phosphoserine: S102 and S108. Residues Q110, H112, E137, and H276 each coordinate Zn(2+). R295 is an active-site residue.

The protein belongs to the mannose-6-phosphate isomerase type 1 family. Zn(2+) is required as a cofactor.

Its subcellular location is the cytoplasm. It catalyses the reaction D-mannose 6-phosphate = D-fructose 6-phosphate. The protein operates within nucleotide-sugar biosynthesis; GDP-alpha-D-mannose biosynthesis; alpha-D-mannose 1-phosphate from D-fructose 6-phosphate: step 1/2. Its function is as follows. Isomerase that catalyzes the interconversion of fructose-6-P and mannose-6-P and has a critical role in the supply of D-mannose derivatives required for many eukaryotic glycosylation reactions. The chain is Mannose-6-phosphate isomerase (MPI) from Macaca fascicularis (Crab-eating macaque).